Reading from the N-terminus, the 545-residue chain is MLAARLIILLSFYWLSASAIDPADPLFVDLPHGKIRGRDNGFYYSYESLPYAEPPVGELRFEAPQPYKQQWTDTFDATQPPVTCMQWNQFIFGDNKLVGVEDCLTVSIYKPKNTSQSSFPVVAHMHGGAFMFGEARQNGHENMMREGKLILVKISYRLGPLGFASTGDADLSGNFGLKDQRLALLWIKQNIASFGGEPENIIVVGHSAGGASVHLQMLREDFAQVAKAGISFGGNAMDPWVIHQSARGRTFELGRIVGCGQASDSMELKNCLKSKPAGEIVSAVHSFLVFAYVPFAPFGPVVESPDAPEAFISQHPVDIIKSGKFAQVPWAVTYNTEDGGYNAAVLLEKQASSGRELIFDLNDHWFDWAPYLLFYRDSMTTIKDMDDYSRKLRQEYLGDRRFSVESYWDLQRLFTDILYKNATELALDLYRKHGKSPVYAFVYDNPANTGIGQFFAKRTDVHFGTVHGDEYFLIFENLARGPEMRSDEEIISRNFLNMINDFVVSGNGTMTFGNCVLQDNVGSNKFQLLSITKNGCENLQLESFP.

Positions 1-19 (MLAARLIILLSFYWLSASA) are cleaved as a signal peptide. C84 and C103 are joined by a disulfide. N113 carries N-linked (GlcNAc...) asparagine glycosylation. S207 serves as the catalytic Acyl-ester intermediate. A disulfide bridge connects residues C259 and C271. The N-linked (GlcNAc...) asparagine glycan is linked to N421. Catalysis depends on H467, which acts as the Charge relay system. An N-linked (GlcNAc...) asparagine glycan is attached at N507. A disulfide bridge links C515 with C536.

The protein belongs to the type-B carboxylesterase/lipase family.

The protein localises to the secreted. It catalyses the reaction a carboxylic ester + H2O = an alcohol + a carboxylate + H(+). This is Esterase-5C (Est-5C) from Drosophila pseudoobscura pseudoobscura (Fruit fly).